A 478-amino-acid chain; its full sequence is Ribosomal RNA small subunit methyltransferase F (478 aa).

S-adenosyl-L-methionine-binding positions include 121 to 127, Glu145, Asp172, and Asp190; that span reads ASAPGSK. Catalysis depends on Cys243, which acts as the Nucleophile.

This sequence belongs to the class I-like SAM-binding methyltransferase superfamily. RsmB/NOP family.

It is found in the cytoplasm. It carries out the reaction cytidine(1407) in 16S rRNA + S-adenosyl-L-methionine = 5-methylcytidine(1407) in 16S rRNA + S-adenosyl-L-homocysteine + H(+). Its function is as follows. Specifically methylates the cytosine at position 1407 (m5C1407) of 16S rRNA. This Shewanella woodyi (strain ATCC 51908 / MS32) protein is Ribosomal RNA small subunit methyltransferase F.